Reading from the N-terminus, the 1490-residue chain is Leucine-rich repeat-containing protein 7 (1490 aa).

17 LRR repeats span residues 23 to 44 (IISVLDYSHCSLQQVPKEVFNF), 47 to 68 (TLEELYLDANQIEELPKQLFNC), 70 to 91 (ALRKLSIPDNDLSSLPTSIASL), 93 to 114 (NLKELDISKNGVQEFPENIKCC), 116 to 137 (CLTIIEASVNPISKLPDGFTQL), 139 to 161 (NLTQLYLNDAFLEFLPANFGRLV), 162 to 183 (KLRILELRENHLKTLPKSMHKL), 185 to 206 (QLERLDLGNNEFSELPEVLDQI), 208 to 229 (NLRELWMDNNALQVLPGSIGKL), 231 to 253 (MLVYLDMSKNRIETVDMDISGCE), 254 to 275 (ALEDLLLSSNMLQQLPDSIGLL), 277 to 298 (KLTTLKVDDNQLTMLPNTIGNL), 300 to 321 (LLEEFDCSCNELESLPPTIGYL), 323 to 344 (SLRTLAVDENFLPELPREIGSC), 346 to 367 (NVTVMSLRSNKLEFLPEEIGQM), 369 to 391 (RLRVLNLSDNRLKNLPFSFTKLK), and 392 to 413 (ELAALWLSDNQSKALIPLQTEA). Phosphoserine occurs at positions 439, 441, and 443. Residues 663–676 (KKESTDESEVDKTH) show a composition bias toward basic and acidic residues. Disordered stretches follow at residues 663 to 709 (KKES…VGSL), 775 to 808 (DNTGFVSEEATGENANNNPLLSSKARSVPAHGRR), and 822 to 899 (ELEQ…YHDP). The span at 677-686 (CLNNSVSSGT) shows a compositional bias: polar residues. Over residues 687–700 (YSDYSPSQASSASS) the composition is skewed to low complexity. A compositionally biased stretch (polar residues) spans 787-799 (ENANNNPLLSSKA). The residue at position 831 (threonine 831) is a Phosphothreonine. Serine 850 is subject to Phosphoserine. Positions 859 to 871 (PSKLETTPTTSPL) are enriched in low complexity. A Phosphothreonine modification is found at threonine 865. Serine 869 is subject to Phosphoserine. A compositionally biased stretch (basic and acidic residues) spans 872 to 882 (PERKDHMKEPT). A phosphoserine mark is found at serine 947, serine 949, and serine 1118. Omega-N-methylarginine is present on arginine 1149. The segment covering 1194 to 1217 (LTQRRPLSARSYSTESYGASQTRP) has biased composition (polar residues). The tract at residues 1194 to 1218 (LTQRRPLSARSYSTESYGASQTRPV) is disordered. Residue serine 1233 is modified to Phosphoserine. Disordered regions lie at residues 1238–1265 (GNYGDKTSDNSDIKTRPTPVKGEESCGK) and 1282–1312 (RLDRTPSQQSNILDNGQEDVSPSGQWNPYPL). Basic and acidic residues predominate over residues 1243–1263 (KTSDNSDIKTRPTPVKGEESC). Positions 1286–1307 (TPSQQSNILDNGQEDVSPSGQW) are enriched in polar residues. Serine 1288 and serine 1392 each carry phosphoserine. The 91-residue stretch at 1398–1488 (EQFCVRIEKN…TVDLVIQREL (91 aa)) folds into the PDZ domain.

It belongs to the LAP (LRR and PDZ) protein family. In terms of assembly, interacts with CNKSR2 and DLG4. Interacts with CTNND2/Catenin delta-2. Forms a complex with N-cadherin through CTNND2. Interacts with CAMK2A. O-glycosylated and phosphorylated. As to expression, brain-specific. Highly concentrated at synapses.

It is found in the cytoplasm. The protein resides in the postsynaptic density. Its function is as follows. Required for normal synaptic spine architecture and function. Necessary for DISC1 and GRM5 localization to postsynaptic density complexes and for both N-methyl D-aspartate receptor-dependent and metabotropic glutamate receptor-dependent long term depression. This chain is Leucine-rich repeat-containing protein 7 (Lrrc7), found in Rattus norvegicus (Rat).